We begin with the raw amino-acid sequence, 506 residues long: Probable cytochrome P450 309a1 (506 aa).

Residues Thr-75, Thr-78, and Thr-81 each carry the phosphothreonine modification. Position 452 (Cys-452) interacts with heme.

Belongs to the cytochrome P450 family. It depends on heme as a cofactor.

The protein localises to the endoplasmic reticulum membrane. It is found in the microsome membrane. Its function is as follows. May be involved in the metabolism of insect hormones and in the breakdown of synthetic insecticides. The chain is Probable cytochrome P450 309a1 (Cyp309a1) from Drosophila melanogaster (Fruit fly).